A 240-amino-acid chain; its full sequence is Mitochondrial inner membrane protease ATP23 (240 aa).

H140 serves as a coordination point for a divalent metal cation. The active site involves E141. Position 144 (H144) interacts with a divalent metal cation.

Belongs to the peptidase M76 family.

It localises to the mitochondrion inner membrane. Functionally, has a dual role in the assembly of mitochondrial ATPase. Acts as a protease that removes N-terminal residues of mitochondrial ATPase CF(0) subunit 6 at the intermembrane space side. Also involved in the correct assembly of the membrane-embedded ATPase CF(0) particle, probably mediating association of subunit 6 with the subunit 9 ring. The polypeptide is Mitochondrial inner membrane protease ATP23 (ATP23) (Scheffersomyces stipitis (strain ATCC 58785 / CBS 6054 / NBRC 10063 / NRRL Y-11545) (Yeast)).